The chain runs to 638 residues: 1-deoxy-D-xylulose-5-phosphate synthase (638 aa).

Thiamine diphosphate contacts are provided by residues histidine 76 and 117-119 (AHS). Position 148 (aspartate 148) interacts with Mg(2+). Thiamine diphosphate-binding positions include 149 to 150 (GS), asparagine 177, tyrosine 287, and glutamate 369. Residue asparagine 177 participates in Mg(2+) binding.

Belongs to the transketolase family. DXPS subfamily. As to quaternary structure, homodimer. It depends on Mg(2+) as a cofactor. Requires thiamine diphosphate as cofactor.

The catalysed reaction is D-glyceraldehyde 3-phosphate + pyruvate + H(+) = 1-deoxy-D-xylulose 5-phosphate + CO2. The protein operates within metabolic intermediate biosynthesis; 1-deoxy-D-xylulose 5-phosphate biosynthesis; 1-deoxy-D-xylulose 5-phosphate from D-glyceraldehyde 3-phosphate and pyruvate: step 1/1. Functionally, catalyzes the acyloin condensation reaction between C atoms 2 and 3 of pyruvate and glyceraldehyde 3-phosphate to yield 1-deoxy-D-xylulose-5-phosphate (DXP). The sequence is that of 1-deoxy-D-xylulose-5-phosphate synthase from Rhodopseudomonas palustris (strain BisB5).